The chain runs to 263 residues: Ribonuclease HII (263 aa).

The 219-residue stretch at alanine 39 to alanine 257 folds into the RNase H type-2 domain. 3 residues coordinate a divalent metal cation: aspartate 45, glutamate 46, and aspartate 157.

Belongs to the RNase HII family. Mn(2+) serves as cofactor. Mg(2+) is required as a cofactor.

It is found in the cytoplasm. It carries out the reaction Endonucleolytic cleavage to 5'-phosphomonoester.. Endonuclease that specifically degrades the RNA of RNA-DNA hybrids. The protein is Ribonuclease HII of Oleidesulfovibrio alaskensis (strain ATCC BAA-1058 / DSM 17464 / G20) (Desulfovibrio alaskensis).